Here is a 355-residue protein sequence, read N- to C-terminus: Spore germination protein XB (355 aa).

10 helical membrane-spanning segments follow: residues 2-24 (VNFF…VIII), 34-56 (DSWI…VFIV), 69-91 (LMRN…YLII), 106-128 (FYLP…FYNI), 135-157 (IALT…MIAN), 180-197 (GMIY…ILFL), 210-232 (LIIV…IVEF), 265-287 (VYQW…PDVL), 299-321 (ISIL…SFYW), and 326-348 (VFLP…FVWV).

It belongs to the amino acid-polyamine-organocation (APC) superfamily. Spore germination protein (SGP) (TC 2.A.3.9) family.

Its subcellular location is the cell membrane. In terms of biological role, may allow B.anthracis to germinate within phagocytic cells and therefore involved in virulence. The polypeptide is Spore germination protein XB (gerXB) (Bacillus anthracis).